Here is a 125-residue protein sequence, read N- to C-terminus: uncharacterized protein (125 aa).

Positions 15-121 (QINQSIIDVI…HSLVLEQKQL (107 aa)) constitute a PRD domain.

This is an uncharacterized protein from Haemophilus influenzae (strain ATCC 51907 / DSM 11121 / KW20 / Rd).